The sequence spans 457 residues: Acetylcholine receptor subunit alpha-1-A (457 aa).

An N-terminal signal peptide occupies residues 1–20; the sequence is MDFVLTRLILLFLAATIIYS. Residues 21 to 230 are Extracellular-facing; it reads SEDESRLIND…ITYHFLLQRL (210 aa). 2 disulfide bridges follow: cysteine 148–cysteine 162 and cysteine 212–cysteine 213. Asparagine 161 is a glycosylation site (N-linked (GlcNAc...) asparagine). 3 helical membrane-spanning segments follow: residues 231-255, 263-281, and 297-316; these read PLYF…VFYL, ITLS…LVIV, and YMLF…VIVI. The Cytoplasmic portion of the chain corresponds to 317 to 428; sequence NTHHRSPSTH…WKFVAMVLDH (112 aa). A helical membrane pass occupies residues 429 to 447; sequence LLLAVFMIVCIIGTLAIFA.

This sequence belongs to the ligand-gated ion channel (TC 1.A.9) family. Acetylcholine receptor (TC 1.A.9.1) subfamily. Alpha-1/CHRNA1 sub-subfamily. In terms of assembly, one of the alpha chains that assemble within the acetylcholine receptor, a pentamer of two alpha chains, a beta, a delta, and a gamma or epsilon chains. As to expression, oocytes.

It is found in the postsynaptic cell membrane. The protein localises to the cell membrane. It catalyses the reaction K(+)(in) = K(+)(out). The enzyme catalyses Na(+)(in) = Na(+)(out). In terms of biological role, upon acetylcholine binding, the AChR responds by an extensive change in conformation that affects all subunits and leads to opening of an ion-conducting channel across the plasma membrane. The sequence is that of Acetylcholine receptor subunit alpha-1-A (chrna1-a) from Xenopus laevis (African clawed frog).